The sequence spans 243 residues: MKRYNAKRKTHRNLKSIKKLIPTVLALLAFVSLLAGIITLHNPKTLPFRQIKITVSSDHIKMAELKDIVVHHIQGGFFSFNASALQTALMSLPWVHDVSVRRIWPNELEIQVEEQRPIARWNQNELITQEGEIFSPPIETIPQNIPQLSGPNDSEENVLNRFQQFSQLLIPFHAAVTALSLTKRGAWSLILNGHTQIFLGRENIDQRFEQFVHLYPKIIGANINRVEHVDLRYSNGLAIQWKN.

Topologically, residues 1-19 (MKRYNAKRKTHRNLKSIKK) are cytoplasmic. The helical transmembrane segment at 20 to 40 (LIPTVLALLAFVSLLAGIITL) threads the bilayer. Topologically, residues 41-243 (HNPKTLPFRQ…SNGLAIQWKN (203 aa)) are periplasmic. Residues 46–115 (LPFRQIKITV…NELEIQVEEQ (70 aa)) enclose the POTRA domain.

The protein belongs to the FtsQ/DivIB family. FtsQ subfamily. As to quaternary structure, part of a complex composed of FtsB, FtsL and FtsQ.

Its subcellular location is the cell inner membrane. Its function is as follows. Essential cell division protein. May link together the upstream cell division proteins, which are predominantly cytoplasmic, with the downstream cell division proteins, which are predominantly periplasmic. May control correct divisome assembly. The protein is Cell division protein FtsQ of Coxiella burnetii (strain RSA 493 / Nine Mile phase I).